The primary structure comprises 207 residues: Ribosome maturation factor RimM (207 aa).

Residues 114–207 form the PRC barrel domain; it reads DDEYYWVDLI…RIDSDWPLDY (94 aa).

This sequence belongs to the RimM family. In terms of assembly, binds ribosomal protein uS19.

It is found in the cytoplasm. An accessory protein needed during the final step in the assembly of 30S ribosomal subunit, possibly for assembly of the head region. Essential for efficient processing of 16S rRNA. May be needed both before and after RbfA during the maturation of 16S rRNA. It has affinity for free ribosomal 30S subunits but not for 70S ribosomes. This Bordetella bronchiseptica (strain ATCC BAA-588 / NCTC 13252 / RB50) (Alcaligenes bronchisepticus) protein is Ribosome maturation factor RimM.